A 378-amino-acid polypeptide reads, in one-letter code: Putative odorant receptor 71a (378 aa).

Topologically, residues Met1–Gln37 are cytoplasmic. The chain crosses the membrane as a helical span at residues Ala38 to Ile58. Residues Lys59–Thr66 are Extracellular-facing. A helical membrane pass occupies residues Ala67–Trp87. The Cytoplasmic segment spans residues Lys88–Val127. A helical membrane pass occupies residues Phe128 to Phe148. Over Asp149–Gln166 the chain is Extracellular. Residues Pro167–Cys187 traverse the membrane as a helical segment. Over Asn188 to Gln255 the chain is Cytoplasmic. A helical membrane pass occupies residues Ile256 to Leu276. Residues Gln277–Pro280 lie on the Extracellular side of the membrane. A helical transmembrane segment spans residues Gly281–Ile301. Residues Tyr302–Pro343 are Cytoplasmic-facing. The helical transmembrane segment at Val344–Asn364 threads the bilayer. Residues Gln365–Gln378 lie on the Extracellular side of the membrane.

Belongs to the insect chemoreceptor superfamily. Heteromeric odorant receptor channel (TC 1.A.69) family. Or2a subfamily. Interacts with Orco. Complexes exist early in the endomembrane system in olfactory sensory neurons (OSNs), coupling these complexes to the conserved ciliary trafficking pathway. Expressed in olfactory sensory neurons in the maxillary palp.

It localises to the cell membrane. Functionally, odorant receptor which mediates acceptance or avoidance behavior, depending on its substrates. The odorant receptor repertoire encodes a large collection of odor stimuli that vary widely in identity, intensity, and duration. May form a complex with Orco to form odorant-sensing units, providing sensitive and prolonged odorant signaling and calcium permeability. In Drosophila melanogaster (Fruit fly), this protein is Putative odorant receptor 71a (Or71a).